A 102-amino-acid chain; its full sequence is Iron-sulfur cluster assembly protein CyaY (102 aa).

It belongs to the frataxin family.

In terms of biological role, involved in iron-sulfur (Fe-S) cluster assembly. May act as a regulator of Fe-S biogenesis. In Pasteurella multocida (strain Pm70), this protein is Iron-sulfur cluster assembly protein CyaY.